The chain runs to 250 residues: Ribosomal RNA small subunit methyltransferase J (250 aa).

Residues 101 to 102 (RD), 117 to 118 (ER), 153 to 154 (SS), and Asp171 each bind S-adenosyl-L-methionine.

Belongs to the methyltransferase superfamily. RsmJ family.

It localises to the cytoplasm. It carries out the reaction guanosine(1516) in 16S rRNA + S-adenosyl-L-methionine = N(2)-methylguanosine(1516) in 16S rRNA + S-adenosyl-L-homocysteine + H(+). Functionally, specifically methylates the guanosine in position 1516 of 16S rRNA. This chain is Ribosomal RNA small subunit methyltransferase J, found in Shigella boydii serotype 18 (strain CDC 3083-94 / BS512).